Here is a 323-residue protein sequence, read N- to C-terminus: tRNA dimethylallyltransferase (323 aa).

Residue 12–19 (GPTAAGKT) participates in ATP binding. 14 to 19 (TAAGKT) contacts substrate. Interaction with substrate tRNA stretches follow at residues 37–40 (DSAL) and 161–165 (QRLTR).

Belongs to the IPP transferase family. As to quaternary structure, monomer. Requires Mg(2+) as cofactor.

The enzyme catalyses adenosine(37) in tRNA + dimethylallyl diphosphate = N(6)-dimethylallyladenosine(37) in tRNA + diphosphate. Catalyzes the transfer of a dimethylallyl group onto the adenine at position 37 in tRNAs that read codons beginning with uridine, leading to the formation of N6-(dimethylallyl)adenosine (i(6)A). The polypeptide is tRNA dimethylallyltransferase (Pseudomonas fluorescens (strain ATCC BAA-477 / NRRL B-23932 / Pf-5)).